Here is a 541-residue protein sequence, read N- to C-terminus: GTPase Obg (541 aa).

Residues P2–V159 enclose the Obg domain. The tract at residues H63–G84 is disordered. In terms of domain architecture, OBG-type G spans A160–A332. GTP-binding positions include G166 to S173, F191 to V195, D213 to G216, N284 to D287, and S313 to A315. The Mg(2+) site is built by S173 and T193. Residues P350–P427 enclose the OCT domain. Residues K497–G541 form a disordered region. The span at G517–G527 shows a compositional bias: low complexity. A compositionally biased stretch (gly residues) spans D528 to G541.

The protein belongs to the TRAFAC class OBG-HflX-like GTPase superfamily. OBG GTPase family. As to quaternary structure, monomer. It depends on Mg(2+) as a cofactor.

It localises to the cytoplasm. In terms of biological role, an essential GTPase which binds GTP, GDP and possibly (p)ppGpp with moderate affinity, with high nucleotide exchange rates and a fairly low GTP hydrolysis rate. Plays a role in control of the cell cycle, stress response, ribosome biogenesis and in those bacteria that undergo differentiation, in morphogenesis control. In Parafrankia sp. (strain EAN1pec), this protein is GTPase Obg.